A 545-amino-acid polypeptide reads, in one-letter code: Esterase-5C (545 aa).

Positions 1 to 19 (MLAARLIILLSFYWLSASA) are cleaved as a signal peptide. Cys-84 and Cys-103 are oxidised to a cystine. Asn-113 is a glycosylation site (N-linked (GlcNAc...) asparagine). The Acyl-ester intermediate role is filled by Ser-207. Cys-259 and Cys-271 are oxidised to a cystine. Asn-421 carries an N-linked (GlcNAc...) asparagine glycan. His-467 serves as the catalytic Charge relay system. Asn-507 carries an N-linked (GlcNAc...) asparagine glycan. Residues Cys-515 and Cys-536 are joined by a disulfide bond.

Belongs to the type-B carboxylesterase/lipase family.

Its subcellular location is the secreted. The catalysed reaction is a carboxylic ester + H2O = an alcohol + a carboxylate + H(+). This is Esterase-5C (Est-5C) from Drosophila pseudoobscura pseudoobscura (Fruit fly).